Reading from the N-terminus, the 186-residue chain is NADH-dependent FMN reductase SfnF (186 aa).

Belongs to the SsuE family.

The catalysed reaction is FMNH2 + NAD(+) = FMN + NADH + 2 H(+). Functionally, involved in the dimethyl sulfide degradation pathway. Catalyzes the NADH-dependent reduction of FMN. The protein is NADH-dependent FMN reductase SfnF of Pseudomonas putida (Arthrobacter siderocapsulatus).